The chain runs to 793 residues: Ent-copalyl diphosphate synthase, chloroplastic (793 aa).

The transit peptide at Met1–Cys47 directs the protein to the chloroplast. Asp372 and Asp374 together coordinate Mg(2+). Positions Asp372–Asp375 match the DXDD motif motif.

It belongs to the terpene synthase family. Mg(2+) serves as cofactor.

Its subcellular location is the plastid. The protein resides in the chloroplast. The enzyme catalyses (2E,6E,10E)-geranylgeranyl diphosphate = ent-copalyl diphosphate. It participates in plant hormone biosynthesis; gibberellin biosynthesis. Catalyzes the conversion of geranylgeranyl diphosphate (GGPP) to the gibberellin precursor ent-copalyl diphosphate (CPP). The polypeptide is Ent-copalyl diphosphate synthase, chloroplastic (Salvia miltiorrhiza (Chinese sage)).